A 400-amino-acid chain; its full sequence is Nicotinate phosphoribosyltransferase (400 aa).

His220 is modified (phosphohistidine; by autocatalysis).

This sequence belongs to the NAPRTase family. Transiently phosphorylated on a His residue during the reaction cycle. Phosphorylation strongly increases the affinity for substrates and increases the rate of nicotinate D-ribonucleotide production. Dephosphorylation regenerates the low-affinity form of the enzyme, leading to product release.

It carries out the reaction nicotinate + 5-phospho-alpha-D-ribose 1-diphosphate + ATP + H2O = nicotinate beta-D-ribonucleotide + ADP + phosphate + diphosphate. It participates in cofactor biosynthesis; NAD(+) biosynthesis; nicotinate D-ribonucleotide from nicotinate: step 1/1. Its function is as follows. Catalyzes the synthesis of beta-nicotinate D-ribonucleotide from nicotinate and 5-phospho-D-ribose 1-phosphate at the expense of ATP. The protein is Nicotinate phosphoribosyltransferase of Shigella sonnei (strain Ss046).